A 551-amino-acid chain; its full sequence is Vacuolar protein sorting-associated protein 17 (551 aa).

Residues 1 to 100 (MTSAVPYDPY…SERVILPERS (100 aa)) form a disordered region. Polar residues-rich tracts occupy residues 29–39 (AATTTDGSSSM) and 46–64 (TEQT…NIQN). The 120-residue stretch at 108-227 (LLAKVTGLER…FFIESDFNTY (120 aa)) folds into the PX domain. Residues 359-385 (IMRNLVQAQQNSKAKQEQARRFRSRRD) adopt a coiled-coil conformation. The tract at residues 474-504 (RLGRHAVSNNNSDTSQTLKGDSWTGESNRKS) is disordered. Polar residues predominate over residues 480-504 (VSNNNSDTSQTLKGDSWTGESNRKS). The residue at position 544 (Ser-544) is a Phosphoserine.

The protein belongs to the VPS17 family. Component of the retromer complex which consists of VPS29, VPS26, VPS35, VPS5 and VPS17. Component of a retromer subcomplex consisting of VPS5 and VPS17. Post-translationally, phosphorylated on one or more serine residues.

The protein resides in the endomembrane system. Component of the membrane-associated retromer complex which is essential in endosome-to-Golgi retrograde transport. The VPS5-VPS17 subcomplex may assemble onto the membrane to promote vesicle formation and is required for recycling the vacuolar protein-sorting receptor. Required for the sorting and delivery of a subset of soluble vacuolar hydrolases. Required for retention of late Golgi membrane proteins and vacuolar biogenesis. Involved in vacuolar fragmentation during hyperosmotic stress. This Saccharomyces cerevisiae (strain ATCC 204508 / S288c) (Baker's yeast) protein is Vacuolar protein sorting-associated protein 17.